Here is a 569-residue protein sequence, read N- to C-terminus: Endo-1,4-beta-xylanase 5 (569 aa).

The signal sequence occupies residues 1-25 (MKNINNGFFLCMLLLLWCFVHSGIS). Asn-197, Asn-261, and Asn-307 each carry an N-linked (GlcNAc...) asparagine glycan. The region spanning 209-500 (EQTKPSFLLG…NTATGDVIDK (292 aa)) is the GH10 domain. Glu-332 serves as the catalytic Proton donor. N-linked (GlcNAc...) asparagine glycosylation is present at Asn-346. Glu-439 serves as the catalytic Nucleophile. 3 N-linked (GlcNAc...) asparagine glycosylation sites follow: Asn-490, Asn-536, and Asn-544.

Belongs to the glycosyl hydrolase 10 (cellulase F) family.

The enzyme catalyses Endohydrolysis of (1-&gt;4)-beta-D-xylosidic linkages in xylans.. It functions in the pathway glycan degradation; xylan degradation. Binds to and hydrolyzes insoluble and soluble xylan substrates. The protein is Endo-1,4-beta-xylanase 5 of Arabidopsis thaliana (Mouse-ear cress).